The primary structure comprises 117 residues: Large ribosomal subunit protein bL19 (117 aa).

It belongs to the bacterial ribosomal protein bL19 family.

Its function is as follows. This protein is located at the 30S-50S ribosomal subunit interface and may play a role in the structure and function of the aminoacyl-tRNA binding site. This Shewanella amazonensis (strain ATCC BAA-1098 / SB2B) protein is Large ribosomal subunit protein bL19.